The following is a 1386-amino-acid chain: Putative ATP-dependent RNA helicase DHX57 (1386 aa).

Residues 1 to 11 (MSSSVRRKGKP) are compositionally biased toward basic residues. Disordered regions lie at residues 1-106 (MSSS…MTSE) and 120-147 (EQDA…NDER). Composition is skewed to gly residues over residues 12-23 (GKGGGKGSSRGG) and 35-50 (GSGG…GGGN). Residues 101-125 (LHMTSENQEKVKALLRDLQEQDADA) adopt a coiled-coil conformation. A phosphoserine mark is found at Ser-127 and Ser-132. Positions 133 to 143 (GEEEDDEPDCC) are enriched in acidic residues. A UBA domain is found at 180 to 220 (TVSPFAVQKLSRYGFNTERCQAVLRMCDGDVGASLEHLLTQ). The segment at 299–326 (ENSLEICKFYLKGNCKFGSKCRFKHEVP) adopts a C3H1-type zinc-finger fold. Phosphoserine occurs at positions 475, 477, and 480. The region spanning 554 to 721 (LNLLRKHQVV…FNSCPVITIP (168 aa)) is the Helicase ATP-binding domain. ATP is bound at residue 567 to 574 (GMTGCGKT). The short motif at 668 to 671 (DEVH) is the DEVH box element. The Helicase C-terminal domain maps to 830-1010 (LIEALLEWIV…QLCLRIKILE (181 aa)).

This sequence belongs to the DEAD box helicase family. DEAH subfamily.

It catalyses the reaction ATP + H2O = ADP + phosphate + H(+). Functionally, probable ATP-binding RNA helicase. This is Putative ATP-dependent RNA helicase DHX57 (DHX57) from Homo sapiens (Human).